We begin with the raw amino-acid sequence, 151 residues long: Ribosome-binding factor A (151 aa).

The interval 120–151 is disordered; the sequence is RSPKVVRDLDDTSSDDTSPDANTDTDKETDAE.

The protein belongs to the RbfA family. Monomer. Binds 30S ribosomal subunits, but not 50S ribosomal subunits or 70S ribosomes.

The protein resides in the cytoplasm. In terms of biological role, one of several proteins that assist in the late maturation steps of the functional core of the 30S ribosomal subunit. Associates with free 30S ribosomal subunits (but not with 30S subunits that are part of 70S ribosomes or polysomes). Required for efficient processing of 16S rRNA. May interact with the 5'-terminal helix region of 16S rRNA. This is Ribosome-binding factor A from Xanthobacter autotrophicus (strain ATCC BAA-1158 / Py2).